Consider the following 157-residue polypeptide: ATP synthase subunit b (157 aa).

Residues 7–27 (LIAQLVVFFILAWFTMKFVWP) form a helical membrane-spanning segment.

This sequence belongs to the ATPase B chain family. F-type ATPases have 2 components, F(1) - the catalytic core - and F(0) - the membrane proton channel. F(1) has five subunits: alpha(3), beta(3), gamma(1), delta(1), epsilon(1). F(0) has three main subunits: a(1), b(2) and c(10-14). The alpha and beta chains form an alternating ring which encloses part of the gamma chain. F(1) is attached to F(0) by a central stalk formed by the gamma and epsilon chains, while a peripheral stalk is formed by the delta and b chains.

It localises to the cell inner membrane. Its function is as follows. F(1)F(0) ATP synthase produces ATP from ADP in the presence of a proton or sodium gradient. F-type ATPases consist of two structural domains, F(1) containing the extramembraneous catalytic core and F(0) containing the membrane proton channel, linked together by a central stalk and a peripheral stalk. During catalysis, ATP synthesis in the catalytic domain of F(1) is coupled via a rotary mechanism of the central stalk subunits to proton translocation. Component of the F(0) channel, it forms part of the peripheral stalk, linking F(1) to F(0). This chain is ATP synthase subunit b, found in Azoarcus sp. (strain BH72).